We begin with the raw amino-acid sequence, 264 residues long: Thymidylate synthase (264 aa).

Arginine 21 contacts dUMP. Position 51 (histidine 51) interacts with (6R)-5,10-methylene-5,6,7,8-tetrahydrofolate. 126–127 (RR) lines the dUMP pocket. Catalysis depends on cysteine 146, which acts as the Nucleophile. Residues 166 to 169 (RSCD), asparagine 177, and 207 to 209 (HLY) each bind dUMP. Aspartate 169 provides a ligand contact to (6R)-5,10-methylene-5,6,7,8-tetrahydrofolate. Serine 263 contributes to the (6R)-5,10-methylene-5,6,7,8-tetrahydrofolate binding site.

The protein belongs to the thymidylate synthase family. Bacterial-type ThyA subfamily. Homodimer.

The protein localises to the cytoplasm. The catalysed reaction is dUMP + (6R)-5,10-methylene-5,6,7,8-tetrahydrofolate = 7,8-dihydrofolate + dTMP. Its pathway is pyrimidine metabolism; dTTP biosynthesis. Functionally, catalyzes the reductive methylation of 2'-deoxyuridine-5'-monophosphate (dUMP) to 2'-deoxythymidine-5'-monophosphate (dTMP) while utilizing 5,10-methylenetetrahydrofolate (mTHF) as the methyl donor and reductant in the reaction, yielding dihydrofolate (DHF) as a by-product. This enzymatic reaction provides an intracellular de novo source of dTMP, an essential precursor for DNA biosynthesis. The protein is Thymidylate synthase of Buchnera aphidicola subsp. Acyrthosiphon pisum (strain 5A).